Here is a 74-residue protein sequence, read N- to C-terminus: Antitoxin VapB39 (74 aa).

Functionally, antitoxin component of a type II toxin-antitoxin (TA) system. This chain is Antitoxin VapB39 (vapB39), found in Mycobacterium tuberculosis (strain CDC 1551 / Oshkosh).